Here is a 475-residue protein sequence, read N- to C-terminus: MDRISSLSNDIISNIVSFLSAKDAAVASVLSKRWQNIYTIVPNLEFDNTLENQGSLTDFLNGLLALPASTRIKNVSIKRRGRDGPNRDADLNRFLCNVLKRGVLKLKLDIWVTLDGRYSLPVEVFTCKTLVELELGSILQIDLVPENALLPALKTLIIDAVQFSDQSGCAFQKLLSSCPVLVELRMLNVQWEHWQWSRRVSSPTLEKLTMNHRYHFGNTYYDMEGITFDTPSLTSLKYYDLPPKSYPTVNLDSLVEATISLTLPLHHAWTGKHARRGDTVPSVTNLIKGLRNVETLNLSSTDTVAAFYFSNEAIPVFENLHRLSIATEREFCWRTLPYLLKKSPNLESLVIGGPLHYNYQLGDGYESEEIYSEDDDEEESESDDDEPICECLSDYSFLESCLVKTVEISEYSGTKIELKHMKHFLEKLSCLELVKVFSHERDEEEHVQLRTNLLNLPRSSKCKTQFEFIPPRSSV.

The F-box domain occupies 1–49 (MDRISSLSNDIISNIVSFLSAKDAAVASVLSKRWQNIYTIVPNLEFDNT).

This Arabidopsis thaliana (Mouse-ear cress) protein is Putative F-box protein At3g58960.